Reading from the N-terminus, the 627-residue chain is Lactose permease (627 aa).

A permease region spans residues 1 to 460 (MKKKLVSRLS…AEIVDQLETQ (460 aa)). 12 consecutive transmembrane segments (helical) span residues 13-33 (AGAF…IVFV), 46-66 (IFII…LDPL), 84-104 (WVVG…TDFG), 111-131 (PVVY…FYSF), 159-179 (VGST…ILFF), 193-213 (WFFF…TVGL), 244-264 (LLWL…LNAL), 281-301 (LLYT…PSLA), 309-329 (LFYA…VASG), 336-356 (VGAE…LMII), 392-412 (WFVS…ASTI), and 419-439 (VFKL…VSIF). The PTS EIIA type-1 domain maps to 493 to 597 (DPVFADKKLG…DDTVIVTVIN (105 aa)). His545 is modified (phosphohistidine; by HPr).

In the N-terminal section; belongs to the sodium:galactoside symporter (TC 2.A.2) family.

The protein localises to the cell membrane. Responsible for transport of beta-galactosides into the cell, with the concomitant uptake of protons (symport system), and also for transport of homologous and heterologous exchange of beta-galactosides. The sequence is that of Lactose permease (lacY) from Lactobacillus delbrueckii subsp. bulgaricus (strain ATCC 11842 / DSM 20081 / BCRC 10696 / JCM 1002 / NBRC 13953 / NCIMB 11778 / NCTC 12712 / WDCM 00102 / Lb 14).